The primary structure comprises 75 residues: Small ribosomal subunit protein bS18 (75 aa).

The protein belongs to the bacterial ribosomal protein bS18 family. Part of the 30S ribosomal subunit. Forms a tight heterodimer with protein bS6.

Functionally, binds as a heterodimer with protein bS6 to the central domain of the 16S rRNA, where it helps stabilize the platform of the 30S subunit. The sequence is that of Small ribosomal subunit protein bS18 from Moorella thermoacetica (strain ATCC 39073 / JCM 9320).